The primary structure comprises 161 residues: C-type natriuretic peptide (161 aa).

Residues 1-22 (MFASRLAALGLLLLALVLDGKP) form the signal peptide. Positions 19–135 (DGKPAPPPQP…GGGGSRRLKG (117 aa)) are disordered. Positions 23–139 (APPPQPLRKA…SRRLKGLPKK (117 aa)) are excised as a propeptide. Low complexity-rich tracts occupy residues 29–60 (LRKA…SSGP) and 76–93 (AAPT…AASR). Residues 94–104 (LLRDLRPDGKQ) show a composition bias toward basic and acidic residues. The segment covering 120 to 130 (GGGGGGGGGGS) has biased composition (gly residues). An intrachain disulfide couples Cys-145 to Cys-161.

The protein belongs to the natriuretic peptide family. Expressed by the venom gland.

It localises to the secreted. Functionally, snake venom natriuretic peptide that has a vasorelaxant activity in rat aortic strips and a diuretic potency in anesthetized rats. May act by activating natriuretic receptors (NPR1 and/or NPR2). The sequence is that of C-type natriuretic peptide from Rhabdophis tigrinus tigrinus (Tiger keelback snake).